The sequence spans 409 residues: Elongation factor Tu (409 aa).

A tr-type G domain is found at 10–214 (KPHVNIGTIG…AVDSYIPTPE (205 aa)). Residues 19-26 (GHVDHGKT) form a G1 region. A GTP-binding site is contributed by 19–26 (GHVDHGKT). Thr26 contacts Mg(2+). A G2 region spans residues 60–64 (GITIN). The segment at 81–84 (DCPG) is G3. Residues 81–85 (DCPGH) and 136–139 (NKKD) each bind GTP. A G4 region spans residues 136–139 (NKKD). The segment at 174–176 (SAK) is G5.

The protein belongs to the TRAFAC class translation factor GTPase superfamily. Classic translation factor GTPase family. EF-Tu/EF-1A subfamily. As to quaternary structure, monomer.

It localises to the cytoplasm. It carries out the reaction GTP + H2O = GDP + phosphate + H(+). GTP hydrolase that promotes the GTP-dependent binding of aminoacyl-tRNA to the A-site of ribosomes during protein biosynthesis. This is Elongation factor Tu from Microcystis aeruginosa (strain NIES-843 / IAM M-2473).